Reading from the N-terminus, the 869-residue chain is Bifunctional uridylyltransferase/uridylyl-removing enzyme (869 aa).

The uridylyltransferase stretch occupies residues 1 to 332; the sequence is MTDTPAERPD…QFDGEATPEP (332 aa). Residues 333 to 691 are uridylyl-removing; that stretch reads LGGGFSLRRG…RRAVPDNDAL (359 aa). Positions 450–572 constitute an HD domain; sequence VDQHTLMVLR…VGTRERLDYL (123 aa). ACT domains follow at residues 692 to 774 and 798 to 869; these read EVFV…RAVP and RISL…LDPV.

Belongs to the GlnD family. Mg(2+) is required as a cofactor.

It catalyses the reaction [protein-PII]-L-tyrosine + UTP = [protein-PII]-uridylyl-L-tyrosine + diphosphate. The catalysed reaction is [protein-PII]-uridylyl-L-tyrosine + H2O = [protein-PII]-L-tyrosine + UMP + H(+). Its activity is regulated as follows. Uridylyltransferase (UTase) activity is inhibited by glutamine, while glutamine activates uridylyl-removing (UR) activity. Its function is as follows. Modifies, by uridylylation and deuridylylation, the PII regulatory proteins (GlnB and homologs), in response to the nitrogen status of the cell that GlnD senses through the glutamine level. Under low glutamine levels, catalyzes the conversion of the PII proteins and UTP to PII-UMP and PPi, while under higher glutamine levels, GlnD hydrolyzes PII-UMP to PII and UMP (deuridylylation). Thus, controls uridylylation state and activity of the PII proteins, and plays an important role in the regulation of nitrogen assimilation and metabolism. This is Bifunctional uridylyltransferase/uridylyl-removing enzyme from Xanthomonas euvesicatoria pv. vesicatoria (strain 85-10) (Xanthomonas campestris pv. vesicatoria).